The sequence spans 515 residues: MAEQVALSQTQTCGILWEELCQSYSFHQSDTHIFIIMGASGDLAKRNIYPTIWWLFQDGLLPKDTFIVGYTDSHFTVANIRKQSEPFFKSTPEEEPKLEEFFAHSSYMASQYDDVASYEHLNSGMNALHQGPQANCLFYLALLPSGYRTVTKNICDTCTSQTGWNRIIVEKPFGRDLQSSNQLSNHIASLFHEDQIYRIDHYLGKEVVQNLMVLRFVNRILGPIWNRDNIACMSFTFKEPFGTEGRWSYLSESGIIWEVMQNPLLQILCLVAMEKPISTNSDNIRDDKVRVLKCISKVQVSNVVLSQYMENPTEEGEATRGYPEDPRVPHGSTTDTFAAAVLYVENERWDGVPFILRCGKALNERKAEVRLQFRDVAGDIFRQQCKRNELVIRVQPNEAVYTKMMTKKPGMFFNPEESELDLTYGNRYKNVKFPDAYERLILDVFCGSQMHFVRSDELREAWRIFTPLLHHIEREKARPIPYVYGSRGPVEADELMKRVGFQYEGTYKWVNPHKL.

The residue at position 2 (Ala-2) is an N-acetylalanine. Ser-8 is subject to Phosphoserine. Thr-10 is subject to Phosphothreonine. 38–45 contributes to the NADP(+) binding site; it reads GASGDLAK. Lys-89 bears the N6-acetyllysine mark. NADP(+) is bound by residues Tyr-147 and Lys-171. Residues Lys-171, 201-205, Glu-239, and Glu-258 each bind D-glucose 6-phosphate; that span reads HYLGK. At Lys-171 the chain carries N6-(2-hydroxyisobutyryl)lysine; alternate. N6-acetyllysine; alternate is present on Lys-171. Position 357 (Arg-357) interacts with NADP(+). Residues Lys-360 and Arg-365 each contribute to the D-glucose 6-phosphate site. Residues Lys-366, Arg-370, and Arg-393 each contribute to the NADP(+) site. A D-glucose 6-phosphate-binding site is contributed by Gln-395. NADP(+) contacts are provided by residues 401 to 403 and 421 to 423; these read YTK and DLT. Lys-403 bears the N6-acetyllysine mark. An N6-acetyllysine modification is found at Lys-432. Arg-487 contributes to the NADP(+) binding site. Residue Lys-497 is modified to N6-acetyllysine. NADP(+)-binding residues include Tyr-503 and Trp-509. At Tyr-503 the chain carries Phosphotyrosine.

The protein belongs to the glucose-6-phosphate dehydrogenase family. As to quaternary structure, homotetramer; dimer of dimers. Interacts with SIRT2; the interaction is enhanced by H(2)O(2) treatment. Forms a ternary complex with ALDOB and TP53; this interaction is direct. ALDOB stabilizes the complex inhibiting G6PD activity and keeping oxidative pentose phosphate metabolism in check. In terms of processing, acetylated by ELP3 at Lys-403; acetylation inhibits its homodimerization and enzyme activity. Deacetylated by SIRT2 at Lys-403; deacetylation stimulates its enzyme activity.

The protein localises to the cytoplasm. It localises to the cytosol. Its subcellular location is the membrane. The catalysed reaction is D-glucose 6-phosphate + NADP(+) = 6-phospho-D-glucono-1,5-lactone + NADPH + H(+). It participates in carbohydrate degradation; pentose phosphate pathway; D-ribulose 5-phosphate from D-glucose 6-phosphate (oxidative stage): step 1/3. In terms of biological role, cytosolic glucose-6-phosphate dehydrogenase that catalyzes the first and rate-limiting step of the oxidative branch within the pentose phosphate pathway/shunt, an alternative route to glycolysis for the dissimilation of carbohydrates and a major source of reducing power and metabolic intermediates for fatty acid and nucleic acid biosynthetic processes. The sequence is that of Glucose-6-phosphate 1-dehydrogenase (G6PD) from Bos indicus (Zebu).